The chain runs to 272 residues: Putative hydro-lyase RPD_1846 (272 aa).

Belongs to the D-glutamate cyclase family.

This Rhodopseudomonas palustris (strain BisB5) protein is Putative hydro-lyase RPD_1846.